A 413-amino-acid chain; its full sequence is METVPPSPITWPDGGALTNDWVHGLMSCFEWSSWNLPPSQLPSLLPVNVFDSLVLTAHKILHKERNCVHIDDLDSVSNVVVVGDIHGQLHDLLFLLKDTGFPCQNRCYVFNGDYVDRGAWGLETFLVLLSWKVLMPDRVYLLRGNHESKYCTSMYGFEKEVLTKYGDKGKHVYRKCLGCFEGLPLASIISGRVYTAHGGLFRSPVLPKRTTRGKKNRRVVLLEPEPSSMKLGTLDELMQARRSVLDPPWEGSNLIPGDVLWSDPSMTPGLSPNEQRGIGLLWGPDCTEDFLKKYELKLIIRSHEGPDAREKRTGLGGMDNGYTIDHNVESGKLITIFSAPDYPQFQATEERYKNKGAYIILQAPDFSDPQFHSFEAVKPRPKAHPYYDFENVIDSDDEMDKSAMDTNNEQPNS.

Cys-28 and Cys-67 are disulfide-bonded. Mn(2+) contacts are provided by Asp-84, His-86, Asp-113, and Asn-145. Residue His-146 is the Proton donor of the active site. Mn(2+) contacts are provided by His-197 and His-303. A disordered region spans residues 391-413; it reads NVIDSDDEMDKSAMDTNNEQPNS. A compositionally biased stretch (polar residues) spans 404–413; that stretch reads MDTNNEQPNS.

This sequence belongs to the PPP phosphatase family. PP-7 subfamily. Monomer, homodimer, and heteromer. Interacts with calmodulin (CaM3 and CaM4) and HSFA1A/HSF1. Mn(2+) is required as a cofactor. In terms of tissue distribution, expressed in leaves, and, to a lower extent, in stems and flowers.

Its subcellular location is the nucleus. It is found in the nucleoplasm. It carries out the reaction O-phospho-L-seryl-[protein] + H2O = L-seryl-[protein] + phosphate. The catalysed reaction is O-phospho-L-threonyl-[protein] + H2O = L-threonyl-[protein] + phosphate. Inhibited by NaF and orthovanadate, as well as by divalent cations such as Ni(2+) and Zn(2+). Inhibited by polylysine with myelin basic protein as substrate, but activated by polylysine with pNPP as substrate. Reversibly regulated by redox agents. Inhibited by submillimolar Pi concentrations. Slightly repressed by calmodulin (CaM). Its function is as follows. Phosphatase active on para-nitrophenylphosphate (pNPP) and on various phosphoproteins such as myelin basic protein. Seems to act as a positive regulator of cryptochrome signaling involved in hypocotyl growth inhibition and cotyledon expansion under white and blue light conditions. Confers thermotolerance. Required for heat shock mediated-signaling pathway that leads to the expression of heat shock proteins (HSPs). In Arabidopsis thaliana (Mouse-ear cress), this protein is Serine/threonine-protein phosphatase 7 (PP7).